The sequence spans 376 residues: WW domain-binding protein 4 (376 aa).

The Matrin-type zinc finger occupies 11 to 42; sequence KFCDYCKCWIADNRPSVEFHERGKNHKENVAK. Over residues 94-107 the composition is skewed to low complexity; sequence ITPVTSTIPPTSTS. Disordered stretches follow at residues 94–128, 189–335, and 356–376; these read ITPVTSTIPPTSTSNQQKEKKEKKKRKKDPSKGRW, SRWE…EPKV, and FKKRRTENGKSRNLRQRGDDQ. 2 WW domains span residues 122 to 155 and 163 to 196; these read DPSKGRWVEGITSEGYHYYYDLISGASQWEKPEG and TAVKTVWVEGLSEDGFTYYYNTETGESRWEKPDD. Residues 189 to 198 show a composition bias toward basic and acidic residues; that stretch reads SRWEKPDDFI. A compositionally biased stretch (polar residues) spans 203-215; it reads DLPSSKVNENSLG. Composition is skewed to basic and acidic residues over residues 218–229 and 243–257; these read DESKSSDSHSDS and ETEKPKIKFKEKNKN. Phosphoserine occurs at positions 220, 227, and 229. Serine 262 is subject to Phosphoserine. Basic and acidic residues predominate over residues 298-309; sequence QEIKQEVESHEE. A compositionally biased stretch (polar residues) spans 316–326; it reads STENEYVSTSE. Residues 357–375 form an interaction with SNRNP200 region; it reads KKRRTENGKSRNLRQRGDD. Residues 361-376 are compositionally biased toward basic and acidic residues; it reads TENGKSRNLRQRGDDQ.

As to quaternary structure, component of the spliceosome B complex. Associated with U2 snRNPs. Binds splicing factors SNRPB, SNRPC and SF1. Interacts via the WW domains with the Pro-rich domains of KHDRBS1/SAM68. Interacts via the WW domains with the Pro-rich domains of WBP11. Interacts with SNRNP200.

It is found in the nucleus. The protein resides in the nucleus speckle. In terms of biological role, involved in pre-mRNA splicing as a component of the spliceosome. May play a role in cross-intron bridging of U1 and U2 snRNPs in the mammalian A complex. This chain is WW domain-binding protein 4 (WBP4), found in Homo sapiens (Human).